The following is a 317-amino-acid chain: Taste receptor type 2 member 14 (317 aa).

Residues 1-7 (MGGVIKS) are Extracellular-facing. A helical transmembrane segment spans residues 8-28 (IFTFVLIVEFIIGNLGNSFIA). The Cytoplasmic segment spans residues 29–55 (LVNCIDWVKGRKISSVDRILTALAISK). A helical transmembrane segment spans residues 56 to 76 (ISLVWLIFGSWCVSVFFPALF). Over 77–87 (ATEKMFRMLTN) the chain is Extracellular. Cholesterol-binding residues include Thr86 and Trp89. A helical transmembrane segment spans residues 88 to 108 (IWTVINHFSVWLATGLGTFYF). Over 109–129 (LKIANFSNSIFLYLKWRVKKV) the chain is Cytoplasmic. Residues 130-150 (VLVLLLVTSVFLFLNIALINI) form a helical membrane-spanning segment. Residues 151–184 (HINASINGYRRNKTCSSDSSNFTRFSSLIVLTST) lie on the Extracellular side of the membrane. 3 N-linked (GlcNAc...) asparagine glycosylation sites follow: Asn153, Asn162, and Asn171. Val180 is a cholesterol binding site. A helical transmembrane segment spans residues 185–205 (VFIFIPFTLSLAMFLLLIFSX). Residues 206–232 (WKHRKKMQHTVKRSGDASTKAHRGVKS) are Cytoplasmic-facing. A helical membrane pass occupies residues 233–253 (VXTFFLLYAIFCLSFFISVWT). Over 254 to 261 (SERLEENL) the chain is Extracellular. Residues 262-282 (IILSQVMGMAYPSCHSCVLIL) form a helical membrane-spanning segment. Ser265 and Met268 together coordinate cholesterol. Residues 283-317 (GNKKLRQASLSVLLWLRYMFKDGEPSGHKEFRESS) are Cytoplasmic-facing.

This sequence belongs to the G-protein coupled receptor T2R family. In terms of assembly, core component of the TAS2R14-GNAI1 complex, consisting of TAS2R14, GNAI1, GNB1 and GNG2; within the complex interacts with GNAI1. Core component of the TAS2R14-GNAT3 complex, consisting of TAS2R14, GNAT3, GNB1 and GNG2; within the complex interacts with GNAT3. Core component of the TAS2R14-GNAS2 complex, consisting of TAS2R14, GNAS2, GNB1 and GNG2; within the complex interacts with GNAS2.

It localises to the membrane. It catalyses the reaction Ca(2+)(in) = Ca(2+)(out). The catalysed reaction is 3',5'-cyclic AMP(in) = 3',5'-cyclic AMP(out). Basal activity is enhanced by binding to bitter tastants, such as flufenamic acid and aristolochic acid. Regulated by cholesterol in a concentration-dependent manner. Gustducin-linked G-protein coupled receptor that plays a role in the perception of bitterness. The activity of this receptor stimulates GNAT3, activating the gustducin G-protein pathway. Likely plays a role in sensing the chemical composition of the gastrointestinal content and other extra-oral tissues via the inhibitory G-protein pathways. In Pan troglodytes (Chimpanzee), this protein is Taste receptor type 2 member 14 (TAS2R14).